A 120-amino-acid chain; its full sequence is Natriuretic peptide (120 aa).

Residues 1-25 (MVGLSRLADGGLLLVLALLPLALDG) form the signal peptide. The propeptide occupies 26 to 70 (KPAPLEKAPMAPARIIPYLRPVGKESRAALDRMVPPEDGDSRRLE). A disulfide bond links C81 and C97. Residues 110–120 (ILPYLRPIRKE) constitute a propeptide that is removed on maturation.

Belongs to the natriuretic peptide family. Expressed by the venom gland.

The protein resides in the secreted. Functionally, natriuretic peptide that dose-dependently induces the rapid relaxation of rat aortic strips phenylephrine-precontracted. Acts by stimulating cGMP production in a dose-dependent manner (by probably activating NPR1 and/or NPR2). May also show potent hypotensive effects. The chain is Natriuretic peptide from Micrurus altirostris (Uruguayan coral snake).